We begin with the raw amino-acid sequence, 244 residues long: L-xylulose reductase (244 aa).

The residue at position 1 (M1) is an N-acetylmethionine. L11–R39 contributes to the NADP(+) binding site. R21 is modified (omega-N-methylarginine). S46 bears the Phosphoserine mark. Residue S136 coordinates substrate. The active-site Proton acceptor is the Y149. Residue K153 is part of the active site.

Belongs to the short-chain dehydrogenases/reductases (SDR) family. In terms of assembly, homotetramer.

The protein resides in the membrane. It catalyses the reaction xylitol + NADP(+) = L-xylulose + NADPH + H(+). Functionally, catalyzes the NADPH-dependent reduction of several pentoses, tetroses, trioses, alpha-dicarbonyl compounds and L-xylulose. Participates in the uronate cycle of glucose metabolism. May play a role in the water absorption and cellular osmoregulation in the proximal renal tubules by producing xylitol, an osmolyte, thereby preventing osmolytic stress from occurring in the renal tubules. This chain is L-xylulose reductase (DCXR), found in Bos taurus (Bovine).